The chain runs to 507 residues: Glycosyltransferase family 92 protein C33H5.2 (507 aa).

The helical transmembrane segment at 6 to 26 (VILVFCASFALFFTFIIFGRY) threads the bilayer. Residues 155–444 (RDVVMCIAPL…LKCYNEKFYD (290 aa)) enclose the GT92 domain.

This sequence belongs to the glycosyltransferase 92 family.

It is found in the membrane. The sequence is that of Glycosyltransferase family 92 protein C33H5.2 from Caenorhabditis elegans.